A 540-amino-acid polypeptide reads, in one-letter code: Glucose-6-phosphate isomerase (540 aa).

Glu350 serves as the catalytic Proton donor. Active-site residues include His381 and Lys503.

It belongs to the GPI family.

Its subcellular location is the cytoplasm. It carries out the reaction alpha-D-glucose 6-phosphate = beta-D-fructose 6-phosphate. It functions in the pathway carbohydrate biosynthesis; gluconeogenesis. Its pathway is carbohydrate degradation; glycolysis; D-glyceraldehyde 3-phosphate and glycerone phosphate from D-glucose: step 2/4. In terms of biological role, catalyzes the reversible isomerization of glucose-6-phosphate to fructose-6-phosphate. The chain is Glucose-6-phosphate isomerase from Paraburkholderia phytofirmans (strain DSM 17436 / LMG 22146 / PsJN) (Burkholderia phytofirmans).